The primary structure comprises 125 residues: Large-conductance mechanosensitive channel (125 aa).

Transmembrane regions (helical) follow at residues 19 to 39 (VGVIIGGAFTAIVNSLVKYII), 42 to 62 (FLGLFVGAIDFSDLVFKIGNA), and 66 to 86 (VGSFLNAVINFLIIAFVVFLM).

It belongs to the MscL family. As to quaternary structure, homopentamer.

It localises to the cell membrane. In terms of biological role, channel that opens in response to stretch forces in the membrane lipid bilayer. May participate in the regulation of osmotic pressure changes within the cell. The polypeptide is Large-conductance mechanosensitive channel (Ligilactobacillus salivarius (strain UCC118) (Lactobacillus salivarius)).